Reading from the N-terminus, the 135-residue chain is Glutaredoxin-C3 (135 aa).

Residues 26-134 enclose the Glutaredoxin domain; the sequence is VARVERLASE…PLLKEAGALW (109 aa). An intrachain disulfide couples cysteine 46 to cysteine 49. The Responsive for interaction with TGA factors motif lies at 132–135; sequence ALWL.

This sequence belongs to the glutaredoxin family. CC-type subfamily.

The protein resides in the cytoplasm. It localises to the nucleus. Functionally, has a glutathione-disulfide oxidoreductase activity in the presence of NADPH and glutathione reductase. Reduces low molecular weight disulfides and proteins. The chain is Glutaredoxin-C3 (GRXC3) from Oryza sativa subsp. japonica (Rice).